Consider the following 130-residue polypeptide: Protein YchQ (130 aa).

Over 1-9 (MTSFSTLLS) the chain is Periplasmic. Residues 10-28 (VHLISIALSVGLLTLRFWL) traverse the membrane as a helical segment. Residues 29–39 (RYQKHPQAFAR) lie on the Cytoplasmic side of the membrane. A helical membrane pass occupies residues 40 to 59 (WTRIVPPVVDTLLLLSGIAL). Topologically, residues 60-73 (MAKAHILPFSGQAQ) are periplasmic. A helical membrane pass occupies residues 74–93 (WLTEKLFGVIIYIVLGFIAL). Residues 94–104 (DYRRMHSQQAR) are Cytoplasmic-facing. A helical transmembrane segment spans residues 105-124 (IIAFPLALVVLYIIIKLATT). Residues 125-130 (KVPLLG) are Periplasmic-facing.

Belongs to the SirB2 family.

It is found in the cell inner membrane. The sequence is that of Protein YchQ (ychQ) from Escherichia coli (strain K12).